We begin with the raw amino-acid sequence, 252 residues long: ATP synthase subunit a (252 aa).

The next 6 helical transmembrane spans lie at F29–I49, F87–F107, I117–Y137, L146–I166, F196–I216, and V219–L239.

This sequence belongs to the ATPase A chain family. As to quaternary structure, F-type ATPases have 2 components, CF(1) - the catalytic core - and CF(0) - the membrane proton channel. CF(1) has five subunits: alpha(3), beta(3), gamma(1), delta(1), epsilon(1). CF(0) has three main subunits: a(1), b(2) and c(9-12). The alpha and beta chains form an alternating ring which encloses part of the gamma chain. CF(1) is attached to CF(0) by a central stalk formed by the gamma and epsilon chains, while a peripheral stalk is formed by the delta and b chains.

It is found in the cell inner membrane. In terms of biological role, key component of the proton channel; it plays a direct role in the translocation of protons across the membrane. This chain is ATP synthase subunit a, found in Bartonella henselae (strain ATCC 49882 / DSM 28221 / CCUG 30454 / Houston 1) (Rochalimaea henselae).